The chain runs to 135 residues: MALRNKAFHQLRQLFQQHTARWQHELPDLTKPQYAVMRAIADKPGIEQVALIEAAVSTKATLAEMLARMENRGLVRREHDPADKRRRFVWLTAEGEKILAAAIPIGDSVDEEFLGRLSGEEQELFMQLVRKMMNA.

Positions Arg4–Asn134 constitute an HTH marR-type domain. Residues Gln48–Asn71 constitute a DNA-binding region (H-T-H motif).

Involved in the temperature-dependent positive control of flagellum-driven swimming motility and cellular aggregation. Regulates fliC expression by directly interacting with fliC promoter. This is Transcriptional regulator HosA (hosA) from Escherichia coli O111:H-.